Reading from the N-terminus, the 251-residue chain is Regulator of G-protein signaling 9-binding protein B (251 aa).

Residues 1 to 230 (MPLQNVKVAD…NSKGCCSDGQ (230 aa)) are Cytoplasmic-facing. 2 coiled-coil regions span residues 52–94 (HLRD…ELER) and 158–187 (ANKA…MKVN). Residues 231-250 (LIVFLLLCGTALVAITLYSI) form a helical; Anchor for type IV membrane protein membrane-spanning segment. Position 251 (Leu251) is a topological domain, extracellular.

It belongs to the RGS7BP/RGS9BP family.

Its subcellular location is the membrane. Its function is as follows. Regulator of G protein-coupled receptor (GPCR) signaling. Probably acts by regulating the activity of some 'R7' family protein (RGS6, RGS7, RGS9 and/or RGS11). The protein is Regulator of G-protein signaling 9-binding protein B (rgs9bp-b) of Xenopus laevis (African clawed frog).